The sequence spans 577 residues: Cryptochrome DASH, chloroplastic/mitochondrial (577 aa).

A chloroplast and mitochondrion-targeting transit peptide spans 1–53 (MIKQPFLLTKFTPFSSKSKHTLFTFHCNFSIKMASLTARTTPTVQNVPGLTPE). Residues 78–219 (GVAIVWFRND…GNDPGSGNTT (142 aa)) form the Photolyase/cryptochrome alpha/beta domain. The tract at residues 550 to 577 (TKKTGDSKTAFSSRRGRPEDNRRKRHGY) is disordered.

Belongs to the DNA photolyase class-1 family. It depends on FAD as a cofactor. (6R)-5,10-methylene-5,6,7,8-tetrahydrofolate serves as cofactor. As to expression, expressed in the endosperm and embryo 96 hours after seed imbibition. In the embryo, detected in the root meristem, the root cap, the shoot apical meristem and the epidermis of cotyledons. In adult plants, detcted in roots, the whole leaf lamina, the stem and in glandular trichomes.

It localises to the plastid. The protein localises to the chloroplast. The protein resides in the mitochondrion. May have a photoreceptor function and might bind ss- and ds-DNA in a sequence non-specific manner. Lacks photolyase activity. Has a potential role in detecting the dawn and dusk transitions and, consequently, in circadian input pathways. In Solanum lycopersicum (Tomato), this protein is Cryptochrome DASH, chloroplastic/mitochondrial.